The primary structure comprises 184 residues: Ribose 1,5-bisphosphate phosphokinase PhnN (184 aa).

11–18 (GPSGAGKD) lines the ATP pocket.

Belongs to the ribose 1,5-bisphosphokinase family.

The enzyme catalyses alpha-D-ribose 1,5-bisphosphate + ATP = 5-phospho-alpha-D-ribose 1-diphosphate + ADP. It functions in the pathway metabolic intermediate biosynthesis; 5-phospho-alpha-D-ribose 1-diphosphate biosynthesis; 5-phospho-alpha-D-ribose 1-diphosphate from D-ribose 5-phosphate (route II): step 3/3. In terms of biological role, catalyzes the phosphorylation of ribose 1,5-bisphosphate to 5-phospho-D-ribosyl alpha-1-diphosphate (PRPP). The polypeptide is Ribose 1,5-bisphosphate phosphokinase PhnN (Burkholderia mallei (strain SAVP1)).